A 254-amino-acid polypeptide reads, in one-letter code: Alcohol dehydrogenase (254 aa).

10–33 (FVAGLGGIGLDTSREIVKSGPKNL) contacts NAD(+). A substrate-binding site is contributed by S138. The Proton acceptor role is filled by Y151.

It belongs to the short-chain dehydrogenases/reductases (SDR) family. Homodimer.

The enzyme catalyses a primary alcohol + NAD(+) = an aldehyde + NADH + H(+). The catalysed reaction is a secondary alcohol + NAD(+) = a ketone + NADH + H(+). This chain is Alcohol dehydrogenase (Adh), found in Drosophila grimshawi (Hawaiian fruit fly).